An 88-amino-acid polypeptide reads, in one-letter code: Large ribosomal subunit protein bL27 (88 aa).

A disordered region spans residues 1 to 22 (MAHKKGASSSRNGRDSNAQRLG). Residues 7–19 (ASSSRNGRDSNAQ) show a composition bias toward polar residues.

Belongs to the bacterial ribosomal protein bL27 family.

In Mycolicibacterium gilvum (strain PYR-GCK) (Mycobacterium gilvum (strain PYR-GCK)), this protein is Large ribosomal subunit protein bL27.